We begin with the raw amino-acid sequence, 888 residues long: Alanine--tRNA ligase (888 aa).

Zn(2+)-binding residues include His564, His568, Cys676, and His680.

Belongs to the class-II aminoacyl-tRNA synthetase family. The cofactor is Zn(2+).

Its subcellular location is the cytoplasm. The catalysed reaction is tRNA(Ala) + L-alanine + ATP = L-alanyl-tRNA(Ala) + AMP + diphosphate. Functionally, catalyzes the attachment of alanine to tRNA(Ala) in a two-step reaction: alanine is first activated by ATP to form Ala-AMP and then transferred to the acceptor end of tRNA(Ala). Also edits incorrectly charged Ser-tRNA(Ala) and Gly-tRNA(Ala) via its editing domain. This chain is Alanine--tRNA ligase, found in Mesorhizobium japonicum (strain LMG 29417 / CECT 9101 / MAFF 303099) (Mesorhizobium loti (strain MAFF 303099)).